We begin with the raw amino-acid sequence, 95 residues long: Aspartyl/glutamyl-tRNA(Asn/Gln) amidotransferase subunit C (95 aa).

The protein belongs to the GatC family. Heterotrimer of A, B and C subunits.

It catalyses the reaction L-glutamyl-tRNA(Gln) + L-glutamine + ATP + H2O = L-glutaminyl-tRNA(Gln) + L-glutamate + ADP + phosphate + H(+). The enzyme catalyses L-aspartyl-tRNA(Asn) + L-glutamine + ATP + H2O = L-asparaginyl-tRNA(Asn) + L-glutamate + ADP + phosphate + 2 H(+). Functionally, allows the formation of correctly charged Asn-tRNA(Asn) or Gln-tRNA(Gln) through the transamidation of misacylated Asp-tRNA(Asn) or Glu-tRNA(Gln) in organisms which lack either or both of asparaginyl-tRNA or glutaminyl-tRNA synthetases. The reaction takes place in the presence of glutamine and ATP through an activated phospho-Asp-tRNA(Asn) or phospho-Glu-tRNA(Gln). In Alkalilimnicola ehrlichii (strain ATCC BAA-1101 / DSM 17681 / MLHE-1), this protein is Aspartyl/glutamyl-tRNA(Asn/Gln) amidotransferase subunit C.